Here is a 394-residue protein sequence, read N- to C-terminus: Probable glycosyltransferase FCK3 (394 aa).

The protein belongs to the afumC glycosyltransferase family.

Its pathway is secondary metabolite biosynthesis. Functionally, probable glycosyl transferase; part of the gene cluster that mediates the biosynthesis of cytokinins such as fusatin, fusatinic acids or 8-oxofusatin, known for their growth promoting and anti-senescence activities toward host plants. FCK1 is a bifunctional enzyme that performs the first steps in the biosynthesis of Fusarium cytokinins. It first condenses adenosine monophosphate (AMP) with dimethylallyl diphosphate (DMAPP) to yield isoprenyl adenosine monophosphate. It then catalyzes the removal of the phosphoribose to produce isopentenylaldehyde. The cytochrome P450 monooxygenase then converts isopentenylaldehyde to trans-zeatin. A condensation step converts trans-zeatin to fusatin which is further modified to produce fusatinic acid. The mechanism for oxidation of fusatin to fusatinic acid remains unknown. 8-oxofusatin could be produced through several pathways, via direct oxygenation of fusatin, or via the 8-oxo-pentenyladenine intermediate which itself must arise from either the prenylation of 8-oxo-AMP by FCK1 and/or oxygenation of isopentenylaldehyde. Both the FCK3 and FCK4 enzymes act downstream of the identified cytokinins to produce yet unidentified compounds. The polypeptide is Probable glycosyltransferase FCK3 (Fusarium pseudograminearum (strain CS3096) (Wheat and barley crown-rot fungus)).